A 314-amino-acid polypeptide reads, in one-letter code: Probable cell division protein WhiA (314 aa).

A DNA-binding region (H-T-H motif) is located at residues 274–308; it reads SLKELGEMVSTGPISKSGVNHRLRKLNDLADKIRN.

It belongs to the WhiA family.

Its function is as follows. Involved in cell division and chromosome segregation. This chain is Probable cell division protein WhiA, found in Staphylococcus aureus (strain Mu3 / ATCC 700698).